The sequence spans 342 residues: Tetraacyldisaccharide 4'-kinase (342 aa).

68-75 (TVGGTGKT) contributes to the ATP binding site.

It belongs to the LpxK family.

It catalyses the reaction a lipid A disaccharide + ATP = a lipid IVA + ADP + H(+). The protein operates within glycolipid biosynthesis; lipid IV(A) biosynthesis; lipid IV(A) from (3R)-3-hydroxytetradecanoyl-[acyl-carrier-protein] and UDP-N-acetyl-alpha-D-glucosamine: step 6/6. Functionally, transfers the gamma-phosphate of ATP to the 4'-position of a tetraacyldisaccharide 1-phosphate intermediate (termed DS-1-P) to form tetraacyldisaccharide 1,4'-bis-phosphate (lipid IVA). The protein is Tetraacyldisaccharide 4'-kinase of Burkholderia cenocepacia (strain ATCC BAA-245 / DSM 16553 / LMG 16656 / NCTC 13227 / J2315 / CF5610) (Burkholderia cepacia (strain J2315)).